The sequence spans 921 residues: Isoleucine--tRNA ligase (921 aa).

The 'HIGH' region signature appears at 57–67 (PYANGDIHMGH). An L-isoleucyl-5'-AMP-binding site is contributed by Glu-553. The 'KMSKS' region motif lies at 594–598 (KMSKS). Lys-597 contributes to the ATP binding site.

It belongs to the class-I aminoacyl-tRNA synthetase family. IleS type 1 subfamily. As to quaternary structure, monomer.

Its subcellular location is the cytoplasm. The catalysed reaction is tRNA(Ile) + L-isoleucine + ATP = L-isoleucyl-tRNA(Ile) + AMP + diphosphate. Functionally, catalyzes the attachment of isoleucine to tRNA(Ile). As IleRS can inadvertently accommodate and process structurally similar amino acids such as valine, to avoid such errors it has two additional distinct tRNA(Ile)-dependent editing activities. One activity is designated as 'pretransfer' editing and involves the hydrolysis of activated Val-AMP. The other activity is designated 'posttransfer' editing and involves deacylation of mischarged Val-tRNA(Ile). This chain is Isoleucine--tRNA ligase, found in Bacillus subtilis (strain 168).